A 178-amino-acid polypeptide reads, in one-letter code: Caveolin-1 (178 aa).

S2 is modified (N-acetylserine). At S2 the chain carries Phosphoserine. The interval 2 to 94 is required for homooligomerization; sequence SGGKYVDSEG…WKASFTTFTV (93 aa). Topologically, residues 2–104 are cytoplasmic; that stretch reads SGGKYVDSEG…TKYWFYRLLS (103 aa). N6-acetyllysine; alternate is present on K5. K5 is covalently cross-linked (Glycyl lysine isopeptide (Lys-Gly) (interchain with G-Cter in ubiquitin); alternate). Y6 carries the post-translational modification Phosphotyrosine. S9 is subject to Phosphoserine. At Y14 the chain carries Phosphotyrosine; by ABL1. Phosphotyrosine is present on Y25. Residues K26 and K30 each participate in a glycyl lysine isopeptide (Lys-Gly) (interchain with G-Cter in ubiquitin) cross-link. S37 carries the phosphoserine modification. Glycyl lysine isopeptide (Lys-Gly) (interchain with G-Cter in ubiquitin) cross-links involve residues K39, K47, and K57. An interaction with CAVIN3 region spans residues 82-94; it reads DGIWKASFTTFTV. Positions 105–125 form an intramembrane region, helical; the sequence is ALFGIPMALIWGIYFAILSFL. The Cytoplasmic segment spans residues 126–178; sequence HIWAVVPCIKSFLIEIQCISRVYSIYVHTVCDPLFEAVGKIFSNVRINLQKEI. An interacts with SPRY1, SPRY2, SPRY3 and SPRY4 region spans residues 131–142; sequence VPCIKSFLIEIQ. S-palmitoyl cysteine attachment occurs at residues C133, C143, and C156. The interacts with SPRY1, SPRY2, and SPRY4 stretch occupies residues 149 to 160; that stretch reads SIYVHTVCDPLF. The interacts with SPRY1, SPRY2, SPRY3 and SPRY4 stretch occupies residues 167–178; sequence FSNVRINLQKEI.

It belongs to the caveolin family. In terms of assembly, homooligomer. Interacts with GLIPR2. Interacts with NOSTRIN. Interacts with SNAP25 and STX1A. Interacts (via the N-terminus) with DPP4; the interaction is direct. Interacts with CTNNB1, CDH1 and JUP. Interacts with PACSIN2; this interaction induces membrane tubulation. Interacts with SLC7A9. Interacts with BMX and BTK. Interacts with TGFBR1. Interacts with CAVIN3 (via leucine-zipper domain) in a cholesterol-sensitive manner. Interacts with CAVIN1. Interacts with EHD2 in a cholesterol-dependent manner. Forms a ternary complex with UBXN6 and VCP; mediates CAV1 targeting to lysosomes for degradation. Interacts with ABCG1; this interaction regulates ABCG1-mediated cholesterol efflux. Interacts with NEU3; this interaction enhances NEU3 sialidase activity within caveola. Interacts (via C-terminus) with SPRY1, SPRY2 (via C-terminus), SPRY3, and SPRY4. Interacts with IGFBP5; this interaction allows trafficking of IGFBP5 from the plasma membrane to the nucleus. Post-translationally, phosphorylated at Tyr-14 by ABL1 in response to oxidative stress. In terms of processing, ubiquitinated. Undergo monoubiquitination and multi- and/or polyubiquitination. Monoubiquitination of N-terminal lysines promotes integration in a ternary complex with UBXN6 and VCP which promotes oligomeric CAV1 targeting to lysosomes for degradation. Ubiquitinated by ZNRF1; leading to degradation and modulation of the TLR4-mediated immune response.

Its subcellular location is the golgi apparatus membrane. It is found in the cell membrane. It localises to the membrane. The protein localises to the caveola. The protein resides in the membrane raft. Functionally, may act as a scaffolding protein within caveolar membranes. Forms a stable heterooligomeric complex with CAV2 that targets to lipid rafts and drives caveolae formation. Mediates the recruitment of CAVIN proteins (CAVIN1/2/3/4) to the caveolae. Interacts directly with G-protein alpha subunits and can functionally regulate their activity. Involved in the costimulatory signal essential for T-cell receptor (TCR)-mediated T-cell activation. Its binding to DPP4 induces T-cell proliferation and NF-kappa-B activation in a T-cell receptor/CD3-dependent manner. Recruits CTNNB1 to caveolar membranes and may regulate CTNNB1-mediated signaling through the Wnt pathway. Negatively regulates TGFB1-mediated activation of SMAD2/3 by mediating the internalization of TGFBR1 from membrane rafts leading to its subsequent degradation. Binds 20(S)-hydroxycholesterol (20(S)-OHC). This chain is Caveolin-1 (CAV1), found in Pongo abelii (Sumatran orangutan).